The chain runs to 338 residues: Acetoin:2,6-dichlorophenolindophenol oxidoreductase subunit beta (338 aa).

In terms of assembly, tetramer of 2 alpha and 2 beta subunits.

It participates in ketone degradation; acetoin degradation. Catalyzes the 2,6-dichlorophenolindophenol-dependent cleavage of acetoin into acetate and acetaldehyde, in vitro. The beta subunit is probably not the catalytic subunit of the enzyme. The chain is Acetoin:2,6-dichlorophenolindophenol oxidoreductase subunit beta (acoB) from Cupriavidus necator (strain ATCC 17699 / DSM 428 / KCTC 22496 / NCIMB 10442 / H16 / Stanier 337) (Ralstonia eutropha).